The chain runs to 171 residues: MAMSQESLTFKDVFVDFTLEEWQQLDSAQKNLYRDVMLENYSHLVSVGYLVAKPDVIFRLGPGEESWMADGGTPVRTCAGEDRPEVWQVDEQIDHYKESQDKLPWQAAFIGKETLKDESGQESRTCRKSIYLSTEFDSVRQRLPKYYSWEKAFKTSFKLSWSKWKLCKKER.

The region spanning 8–79 is the KRAB domain; that stretch reads LTFKDVFVDF…DGGTPVRTCA (72 aa).

Expressed in brain, ovary, testis, prostate, tonsil, heart, bone marrow, colon, breast and kidney.

The polypeptide is KRAB domain-containing protein 4 (KRBOX4) (Homo sapiens (Human)).